The chain runs to 203 residues: N-(5'-phosphoribosyl)anthranilate isomerase (203 aa).

The protein belongs to the TrpF family.

The catalysed reaction is N-(5-phospho-beta-D-ribosyl)anthranilate = 1-(2-carboxyphenylamino)-1-deoxy-D-ribulose 5-phosphate. The protein operates within amino-acid biosynthesis; L-tryptophan biosynthesis; L-tryptophan from chorismate: step 3/5. This Caldanaerobacter subterraneus subsp. tengcongensis (strain DSM 15242 / JCM 11007 / NBRC 100824 / MB4) (Thermoanaerobacter tengcongensis) protein is N-(5'-phosphoribosyl)anthranilate isomerase.